The sequence spans 318 residues: Aspartate carbamoyltransferase catalytic subunit (318 aa).

Carbamoyl phosphate is bound by residues arginine 59 and threonine 60. Position 87 (lysine 87) interacts with L-aspartate. Residues arginine 109, histidine 137, and glutamine 140 each contribute to the carbamoyl phosphate site. L-aspartate contacts are provided by arginine 170 and arginine 224. The carbamoyl phosphate site is built by glycine 265 and proline 266.

The protein belongs to the aspartate/ornithine carbamoyltransferase superfamily. ATCase family. Heterododecamer (2C3:3R2) of six catalytic PyrB chains organized as two trimers (C3), and six regulatory PyrI chains organized as three dimers (R2).

It carries out the reaction carbamoyl phosphate + L-aspartate = N-carbamoyl-L-aspartate + phosphate + H(+). It functions in the pathway pyrimidine metabolism; UMP biosynthesis via de novo pathway; (S)-dihydroorotate from bicarbonate: step 2/3. Its function is as follows. Catalyzes the condensation of carbamoyl phosphate and aspartate to form carbamoyl aspartate and inorganic phosphate, the committed step in the de novo pyrimidine nucleotide biosynthesis pathway. This Rhizobium etli (strain ATCC 51251 / DSM 11541 / JCM 21823 / NBRC 15573 / CFN 42) protein is Aspartate carbamoyltransferase catalytic subunit.